The following is a 638-amino-acid chain: MILFKQVGYFVSLFATVSCGCLSQLYANTFFRGGDLAAIYTPDAQHCQKMCTFHPRCLLFSFLAVSPTKETDKRFGCFMKESITGTLPRIHRTGAISGHSLKQCGHQLSACHQDIYEGLDMRGSNFNISKTDSIEECQKLCTNNIHCQFFTYATKAFHRPEYRKSCLLKRSSSGTPTSIKPVDNLVSGFSLKSCALSEIGCPMDIFQHFAFADLNVSQVVTPDAFVCRTVCTFHPNCLFFTFYTNEWETESQRNVCFLKTSKSGRPSPPIIQENAVSGYSLFTCRKARPEPCHFKIYSGVAFEGEELNATFVQGADACQETCTKTIRCQFFTYSLLPQDCKAEGCKCSLRLSTDGSPTRITYEAQGSSGYSLRLCKVVESSDCTTKINARIVGGTNSSLGEWPWQVSLQVKLVSQNHMCGGSIIGRQWILTAAHCFDGIPYPDVWRIYGGILNLSEITNKTPFSSIKELIIHQKYKMSEGSYDIALIKLQTPLNYTEFQKPICLPSKADTNTIYTNCWVTGWGYTKERGETQNILQKATIPLVPNEECQKKYRDYVITKQMICAGYKEGGIDACKGDSGGPLVCKHSGRWQLVGITSWGEGCARKEQPGVYTKVAEYIDWILEKIQSSKERALETSPA.

An N-terminal signal peptide occupies residues 1-19 (MILFKQVGYFVSLFATVSC). Apple domains follow at residues 21 to 104 (CLSQ…LKQC), 111 to 194 (CHQD…LKSC), 201 to 284 (CPMD…LFTC), and 292 to 375 (CHFK…LRLC). 18 cysteine pairs are disulfide-bonded: Cys21/Cys104, Cys47/Cys77, Cys51/Cys57, Cys111/Cys194, Cys137/Cys166, Cys141/Cys147, Cys201/Cys284, Cys227/Cys256, Cys231/Cys237, Cys292/Cys375, Cys318/Cys347, Cys322/Cys328, Cys340/Cys345, Cys383/Cys503, Cys419/Cys435, Cys517/Cys584, Cys548/Cys563, and Cys574/Cys602. Asn127 is a glycosylation site (N-linked (GlcNAc...) asparagine). The N-linked (GlcNAc...) asparagine glycan is linked to Asn215. Asn308 carries N-linked (GlcNAc...) asparagine glycosylation. Residues 391–626 (IVGGTNSSLG…YIDWILEKIQ (236 aa)) form the Peptidase S1 domain. Asn396 carries N-linked (GlcNAc...) asparagine glycosylation. Residue His434 is the Charge relay system of the active site. Asn453 is a glycosylation site (N-linked (GlcNAc...) asparagine). Asp483 functions as the Charge relay system in the catalytic mechanism. N-linked (GlcNAc...) asparagine glycosylation is present at Asn494. Residue Ser578 is the Charge relay system of the active site.

The protein belongs to the peptidase S1 family. Plasma kallikrein subfamily. Forms a heterodimer with SERPINA5. The zymogen is activated by factor XIIa, which cleaves the molecule into a light chain, which contains the active site, and a heavy chain, which associates with HMW kininogen. These chains are linked by one or more disulfide bonds.

The protein localises to the secreted. The catalysed reaction is Cleaves selectively Arg-|-Xaa and Lys-|-Xaa bonds, including Lys-|-Arg and Arg-|-Ser bonds in (human) kininogen to release bradykinin.. Its activity is regulated as follows. Inhibited by SERPINA5. The enzyme cleaves Lys-Arg and Arg-Ser bonds. It activates, in a reciprocal reaction, factor XII after its binding to a negatively charged surface. It also releases bradykinin from HMW kininogen and may also play a role in the renin-angiotensin system by converting prorenin into renin. This is Plasma kallikrein (Klkb1) from Rattus norvegicus (Rat).